Here is an 87-residue protein sequence, read N- to C-terminus: Small ribosomal subunit protein uS17 (87 aa).

Belongs to the universal ribosomal protein uS17 family. Part of the 30S ribosomal subunit.

One of the primary rRNA binding proteins, it binds specifically to the 5'-end of 16S ribosomal RNA. In Bacillus mycoides (strain KBAB4) (Bacillus weihenstephanensis), this protein is Small ribosomal subunit protein uS17.